The sequence spans 269 residues: Kafirin PGK1 (269 aa).

The N-terminal stretch at 1–21 (MATKIFALLALHALLVSGTTA) is a signal peptide.

The protein belongs to the zein family.

In terms of biological role, major seed storage prolamin. This chain is Kafirin PGK1, found in Sorghum bicolor (Sorghum).